A 163-amino-acid chain; its full sequence is Phosphopantetheine adenylyltransferase (163 aa).

Residue threonine 10 coordinates substrate. Residues 10 to 11 (TF) and histidine 18 each bind ATP. Substrate contacts are provided by lysine 42, leucine 74, and arginine 88. Residues 89–91 (GLR), glutamate 99, and 124–130 (NSFISST) each bind ATP.

Belongs to the bacterial CoaD family. As to quaternary structure, homohexamer. Requires Mg(2+) as cofactor.

Its subcellular location is the cytoplasm. The enzyme catalyses (R)-4'-phosphopantetheine + ATP + H(+) = 3'-dephospho-CoA + diphosphate. It participates in cofactor biosynthesis; coenzyme A biosynthesis; CoA from (R)-pantothenate: step 4/5. Reversibly transfers an adenylyl group from ATP to 4'-phosphopantetheine, yielding dephospho-CoA (dPCoA) and pyrophosphate. This is Phosphopantetheine adenylyltransferase from Shewanella baltica (strain OS223).